Here is a 270-residue protein sequence, read N- to C-terminus: Glucosamine-6-phosphate deaminase (270 aa).

The active-site Proton acceptor; for enolization step is Asp-68. Asp-145 serves as the catalytic For ring-opening step. His-147 (proton acceptor; for ring-opening step) is an active-site residue. Catalysis depends on Glu-152, which acts as the For ring-opening step.

Belongs to the glucosamine/galactosamine-6-phosphate isomerase family. NagB subfamily.

It carries out the reaction alpha-D-glucosamine 6-phosphate + H2O = beta-D-fructose 6-phosphate + NH4(+). Its pathway is amino-sugar metabolism; N-acetylneuraminate degradation; D-fructose 6-phosphate from N-acetylneuraminate: step 5/5. In terms of biological role, catalyzes the reversible isomerization-deamination of glucosamine 6-phosphate (GlcN6P) to form fructose 6-phosphate (Fru6P) and ammonium ion. The polypeptide is Glucosamine-6-phosphate deaminase (Bifidobacterium longum (strain DJO10A)).